The chain runs to 549 residues: Indole-3-acetic acid-amido synthetase GH3.2 (549 aa).

It belongs to the IAA-amido conjugating enzyme family. Expressed in flowers, pollen, cotyledons, stipules, true leaves, hypocotyls, and all parts of the roots except for the primary root tips.

Its function is as follows. Catalyzes the synthesis of indole-3-acetic acid (IAA)-amino acid conjugates, providing a mechanism for the plant to cope with the presence of excess auxin. Strongly reactive with Glu, Gln, Trp, Asp, Ala, Leu, Phe, Gly, Tyr, Met, Ile and Val. Little or no product formation with His, Ser, Thr, Arg, Lys, or Cys. Also active on pyruvic and butyric acid analogs of IAA, PAA and the synthetic auxin naphthaleneacetic acid (NAA). The two chlorinated synthetic auxin herbicides 2,4-D and 3,6-dichloro-o-anisic acid (dicamba) cannot be used as substrates. This Arabidopsis thaliana (Mouse-ear cress) protein is Indole-3-acetic acid-amido synthetase GH3.2 (GH3.2).